Reading from the N-terminus, the 230-residue chain is Small ribosomal subunit protein uS3 (230 aa).

Residues valine 39 to arginine 107 enclose the KH type-2 domain.

This sequence belongs to the universal ribosomal protein uS3 family. Part of the 30S ribosomal subunit. Forms a tight complex with proteins S10 and S14.

Binds the lower part of the 30S subunit head. Binds mRNA in the 70S ribosome, positioning it for translation. This Shewanella amazonensis (strain ATCC BAA-1098 / SB2B) protein is Small ribosomal subunit protein uS3.